Consider the following 216-residue polypeptide: Pathogenicity-related ORF2 (216 aa).

4 consecutive transmembrane segments (helical) span residues 6-26 (VGSLLLVVVIMLGLLPFAAMV), 55-75 (LNGVALLVSCFVMAPVGMEAF), 157-177 (IGFLLYLVFIVIDLVVANALM), and 193-213 (FKLLLFVAMDGWSMLIHGLVL).

This sequence belongs to the FliP/MopC/SpaP family.

The protein resides in the cell membrane. Functionally, important for pathogenicity. In Xanthomonas campestris pv. glycines, this protein is Pathogenicity-related ORF2.